A 1122-amino-acid chain; its full sequence is DNA polymerase (1122 aa).

Belongs to the DNA polymerase type-B family. Heterodimer with the terminal protein; this heterodimer binds to bp 9 to 18 of the genome. Forms a complex with viral pTP, DBP and hosts NFIA and POU2F1/OCT1 for initiation of replication.

It is found in the host nucleus. The enzyme catalyses DNA(n) + a 2'-deoxyribonucleoside 5'-triphosphate = DNA(n+1) + diphosphate. Eukaryotic-type DNA polymerase involved in viral genomic replication. DNA synthesis is protein primed, and acts in a strand displacement replication. Assembles in complex with viral pTP, DBP, host NFIA and host POU2F1/OCT1 on viral origin of replication. The polymerase covalently transfers dCMP onto pTP, thereby initiating complementary strand synthesis. The polypeptide is DNA polymerase (Human adenovirus B serotype 7 (HAdV-7)).